We begin with the raw amino-acid sequence, 172 residues long: L-methionine sulfoximine/L-methionine sulfone acetyltransferase (172 aa).

The region spanning 3 to 166 is the N-acetyltransferase domain; that stretch reads ASIRDAGVAD…DLTFMQLNLD (164 aa). Substrate is bound by residues 75-77 and 85-87; these read RPF and EHS. Acetyl-CoA contacts are provided by residues 88–90, 96–101, and Asn127; these read VYV and GKGLGV.

Homodimer.

The catalysed reaction is L-methionine sulfoximine + acetyl-CoA = N-acetyl-L-methionine sulfoximine + CoA + H(+). It catalyses the reaction L-methionine sulfone + acetyl-CoA = N-acetyl-L-methionine sulfone + CoA + H(+). In terms of biological role, plays a role in the resistance against the toxic effects of L-methionine sulfoximine (MSX), a rare amino acid, which inhibits glutamine synthetase (GlnA). Catalyzes the acetylation of L-methionine sulfoximine (MSX). This chain is L-methionine sulfoximine/L-methionine sulfone acetyltransferase, found in Pseudomonas aeruginosa (strain ATCC 15692 / DSM 22644 / CIP 104116 / JCM 14847 / LMG 12228 / 1C / PRS 101 / PAO1).